Here is a 162-residue protein sequence, read N- to C-terminus: Transcription elongation factor GreA (162 aa).

Positions 1-28 (MQKEPMLEETYRKLSEELEQLKSVERGV) form a coiled coil.

The protein belongs to the GreA/GreB family.

Necessary for efficient RNA polymerase transcription elongation past template-encoded arresting sites. The arresting sites in DNA have the property of trapping a certain fraction of elongating RNA polymerases that pass through, resulting in locked ternary complexes. Cleavage of the nascent transcript by cleavage factors such as GreA or GreB allows the resumption of elongation from the new 3'terminus. GreA releases sequences of 2 to 3 nucleotides. The chain is Transcription elongation factor GreA from Sulfurovum sp. (strain NBC37-1).